We begin with the raw amino-acid sequence, 191 residues long: Protein GrpE (191 aa).

This sequence belongs to the GrpE family. In terms of assembly, homodimer.

It localises to the cytoplasm. Participates actively in the response to hyperosmotic and heat shock by preventing the aggregation of stress-denatured proteins, in association with DnaK and GrpE. It is the nucleotide exchange factor for DnaK and may function as a thermosensor. Unfolded proteins bind initially to DnaJ; upon interaction with the DnaJ-bound protein, DnaK hydrolyzes its bound ATP, resulting in the formation of a stable complex. GrpE releases ADP from DnaK; ATP binding to DnaK triggers the release of the substrate protein, thus completing the reaction cycle. Several rounds of ATP-dependent interactions between DnaJ, DnaK and GrpE are required for fully efficient folding. In Listeria monocytogenes serotype 4a (strain HCC23), this protein is Protein GrpE.